Consider the following 678-residue polypeptide: Pentatricopeptide repeat-containing protein At5g39980, chloroplastic (678 aa).

Residues 1–64 (MYIEIASSSS…NKKVWRKQPE (64 aa)) constitute a chloroplast transit peptide. PPR repeat units lie at residues 154–188 (SVFA…ALAP), 189–223 (DRYT…RVSG), 224–258 (DLVL…GITP), 259–293 (DLVA…GVLP), 294–328 (NTVS…NCAL), 329–363 (DLTT…DIEP), 364–398 (NVVS…DIEQ), 399–433 (NVVT…GIEP), 434–468 (NAIT…GVEI), 469–503 (DQVL…DNIP), 535–569 (DISV…GYFP), 570–604 (DSNV…GCVF), 605–638 (PDEV…DPNV), and 639–674 (NSKE…GILK).

This sequence belongs to the PPR family. P subfamily.

It is found in the plastid. The protein localises to the chloroplast. In Arabidopsis thaliana (Mouse-ear cress), this protein is Pentatricopeptide repeat-containing protein At5g39980, chloroplastic.